We begin with the raw amino-acid sequence, 306 residues long: NAD kinase 1 (306 aa).

Catalysis depends on Asp67, which acts as the Proton acceptor. NAD(+) contacts are provided by residues 67 to 68 (DG), 149 to 150 (NE), Asp181, and 192 to 197 (TGYTVS).

It belongs to the NAD kinase family. Requires a divalent metal cation as cofactor.

Its subcellular location is the cytoplasm. It catalyses the reaction NAD(+) + ATP = ADP + NADP(+) + H(+). Its function is as follows. Involved in the regulation of the intracellular balance of NAD and NADP, and is a key enzyme in the biosynthesis of NADP. Catalyzes specifically the phosphorylation on 2'-hydroxyl of the adenosine moiety of NAD to yield NADP. This chain is NAD kinase 1, found in Trichormus variabilis (strain ATCC 29413 / PCC 7937) (Anabaena variabilis).